Here is a 126-residue protein sequence, read N- to C-terminus: Fluoride-specific ion channel FluC (126 aa).

4 consecutive transmembrane segments (helical) span residues 5-25 (LHFL…WLLG), 35-55 (WGTL…LGLI), 68-88 (ALVT…AEVV), and 99-119 (AAGY…LGLA). Positions 75 and 78 each coordinate Na(+).

This sequence belongs to the fluoride channel Fluc/FEX (TC 1.A.43) family.

The protein resides in the cell inner membrane. The catalysed reaction is fluoride(in) = fluoride(out). Na(+) is not transported, but it plays an essential structural role and its presence is essential for fluoride channel function. Functionally, fluoride-specific ion channel. Important for reducing fluoride concentration in the cell, thus reducing its toxicity. In Bordetella avium (strain 197N), this protein is Fluoride-specific ion channel FluC.